A 164-amino-acid polypeptide reads, in one-letter code: Ribosome-binding factor A (164 aa).

The protein belongs to the RbfA family. As to quaternary structure, monomer. Binds 30S ribosomal subunits, but not 50S ribosomal subunits or 70S ribosomes.

Its subcellular location is the cytoplasm. One of several proteins that assist in the late maturation steps of the functional core of the 30S ribosomal subunit. Associates with free 30S ribosomal subunits (but not with 30S subunits that are part of 70S ribosomes or polysomes). Required for efficient processing of 16S rRNA. May interact with the 5'-terminal helix region of 16S rRNA. This is Ribosome-binding factor A from Mycobacterium leprae (strain Br4923).